The sequence spans 392 residues: Phosphoglycerate kinase (392 aa).

Substrate contacts are provided by residues 21–23 (DFN), Arg-36, 59–62 (HLGR), Arg-118, and Arg-151. ATP contacts are provided by residues Lys-202, Glu-321, and 347-350 (GGDS).

It belongs to the phosphoglycerate kinase family. As to quaternary structure, monomer.

Its subcellular location is the cytoplasm. The enzyme catalyses (2R)-3-phosphoglycerate + ATP = (2R)-3-phospho-glyceroyl phosphate + ADP. It functions in the pathway carbohydrate degradation; glycolysis; pyruvate from D-glyceraldehyde 3-phosphate: step 2/5. The chain is Phosphoglycerate kinase from Symbiobacterium thermophilum (strain DSM 24528 / JCM 14929 / IAM 14863 / T).